The sequence spans 159 residues: Nucleoside diphosphate kinase (159 aa).

Residues Lys14, Phe62, Arg90, Thr96, and Arg107 each contribute to the ATP site. The active-site Pros-phosphohistidine intermediate is the His123.

It belongs to the NDK family. Mg(2+) is required as a cofactor.

The protein resides in the cytoplasm. It catalyses the reaction a 2'-deoxyribonucleoside 5'-diphosphate + ATP = a 2'-deoxyribonucleoside 5'-triphosphate + ADP. It carries out the reaction a ribonucleoside 5'-diphosphate + ATP = a ribonucleoside 5'-triphosphate + ADP. Functionally, major role in the synthesis of nucleoside triphosphates other than ATP. The ATP gamma phosphate is transferred to the NDP beta phosphate via a ping-pong mechanism, using a phosphorylated active-site intermediate. This Pyrococcus abyssi (strain GE5 / Orsay) protein is Nucleoside diphosphate kinase.